The chain runs to 131 residues: Fumarate reductase subunit C (131 aa).

3 consecutive transmembrane segments (helical) span residues 30-50 (EGTA…LFAL), 63-83 (FLQN…ALLH), and 109-129 (IIKS…FVAL).

It belongs to the FrdC family. Part of an enzyme complex containing four subunits: a flavoprotein (FrdA), an iron-sulfur protein (FrdB), and two hydrophobic anchor proteins (FrdC and FrdD).

It is found in the cell inner membrane. Functionally, two distinct, membrane-bound, FAD-containing enzymes are responsible for the catalysis of fumarate and succinate interconversion; fumarate reductase is used in anaerobic growth, and succinate dehydrogenase is used in aerobic growth. Anchors the catalytic components of the fumarate reductase complex to the cell inner membrane, binds quinones. The protein is Fumarate reductase subunit C of Shigella boydii serotype 4 (strain Sb227).